The primary structure comprises 275 residues: NADPH-dependent 7-cyano-7-deazaguanine reductase (275 aa).

81–83 (IES) provides a ligand contact to substrate. Position 83 to 84 (83 to 84 (SK)) interacts with NADPH. The active-site Thioimide intermediate is the cysteine 181. The active-site Proton donor is aspartate 188. 220-221 (HE) serves as a coordination point for substrate. Position 249–250 (249–250 (RG)) interacts with NADPH.

It belongs to the GTP cyclohydrolase I family. QueF type 2 subfamily. Homodimer.

Its subcellular location is the cytoplasm. The catalysed reaction is 7-aminomethyl-7-carbaguanine + 2 NADP(+) = 7-cyano-7-deazaguanine + 2 NADPH + 3 H(+). It participates in tRNA modification; tRNA-queuosine biosynthesis. Its function is as follows. Catalyzes the NADPH-dependent reduction of 7-cyano-7-deazaguanine (preQ0) to 7-aminomethyl-7-deazaguanine (preQ1). This Xylella fastidiosa (strain M12) protein is NADPH-dependent 7-cyano-7-deazaguanine reductase.